Here is a 370-residue protein sequence, read N- to C-terminus: Aminomethyltransferase (370 aa).

The protein belongs to the GcvT family. As to quaternary structure, the glycine cleavage system is composed of four proteins: P, T, L and H.

It catalyses the reaction N(6)-[(R)-S(8)-aminomethyldihydrolipoyl]-L-lysyl-[protein] + (6S)-5,6,7,8-tetrahydrofolate = N(6)-[(R)-dihydrolipoyl]-L-lysyl-[protein] + (6R)-5,10-methylene-5,6,7,8-tetrahydrofolate + NH4(+). In terms of biological role, the glycine cleavage system catalyzes the degradation of glycine. The sequence is that of Aminomethyltransferase from Corynebacterium aurimucosum (strain ATCC 700975 / DSM 44827 / CIP 107346 / CN-1) (Corynebacterium nigricans).